A 378-amino-acid chain; its full sequence is Succinyl-diaminopimelate desuccinylase (378 aa).

A Zn(2+)-binding site is contributed by His-67. The active site involves Asp-69. Residue Asp-100 coordinates Zn(2+). The Proton acceptor role is filled by Glu-134. Residues Glu-135, Glu-163, and His-349 each coordinate Zn(2+).

The protein belongs to the peptidase M20A family. DapE subfamily. As to quaternary structure, homodimer. Requires Zn(2+) as cofactor. Co(2+) is required as a cofactor.

It carries out the reaction N-succinyl-(2S,6S)-2,6-diaminopimelate + H2O = (2S,6S)-2,6-diaminopimelate + succinate. Its pathway is amino-acid biosynthesis; L-lysine biosynthesis via DAP pathway; LL-2,6-diaminopimelate from (S)-tetrahydrodipicolinate (succinylase route): step 3/3. Functionally, catalyzes the hydrolysis of N-succinyl-L,L-diaminopimelic acid (SDAP), forming succinate and LL-2,6-diaminopimelate (DAP), an intermediate involved in the bacterial biosynthesis of lysine and meso-diaminopimelic acid, an essential component of bacterial cell walls. The chain is Succinyl-diaminopimelate desuccinylase from Nitrosomonas eutropha (strain DSM 101675 / C91 / Nm57).